Here is a 366-residue protein sequence, read N- to C-terminus: Ferrochelatase (366 aa).

2 residues coordinate Fe cation: His-210 and Glu-293.

Belongs to the ferrochelatase family.

The protein resides in the cytoplasm. The enzyme catalyses heme b + 2 H(+) = protoporphyrin IX + Fe(2+). It functions in the pathway porphyrin-containing compound metabolism; protoheme biosynthesis; protoheme from protoporphyrin-IX: step 1/1. Catalyzes the ferrous insertion into protoporphyrin IX. This Leptospira borgpetersenii serovar Hardjo-bovis (strain L550) protein is Ferrochelatase.